Reading from the N-terminus, the 408-residue chain is MKVSSAIALLLPVVAARFVDSAFEQDHVQLHPEQAAAEQFLIELSPGETRWVTEDEKWELRRNGQRFMDITDNRDLGLASAQSATTGPARVFPPNVTLDEEVFPLLANLSKGELQTHLEKLTSFHTRYYRSEHGRASSNWLLGQVKKTVGEAGGFKHGITVKPFKHPWGQNSVIARIPGQTNRTIVVGAHQDSINLFLPSVLSAPGADDDGSGTVTILEALRVLLQSEAVLAGKAANTIEFHWYSAEEGGLLGSQAIFNTYEKASRDVRAMLQQDMTGFVQRTLDAGEVESVGVIVDYVDPGLTAFIKKVITAYCDIPFIETKCGYACSDHASASKAGYPSAFVIESAFERSDDHIHTSDDLIKYLSFDHMLQHARLTLAFVYELAFADFDKLDKAAAVSVAPEMGDL.

The N-terminal stretch at 1–16 is a signal peptide; the sequence is MKVSSAIALLLPVVAA. Positions 17 to 89 are excised as a propeptide; it reads RFVDSAFEQD…SAQSATTGPA (73 aa). Residues asparagine 95, asparagine 108, and asparagine 182 are each glycosylated (N-linked (GlcNAc...) asparagine). Zn(2+)-binding residues include histidine 190, aspartate 209, glutamate 248, and aspartate 275. The cysteines at positions 324 and 328 are disulfide-linked. Residue histidine 357 coordinates Zn(2+).

The protein belongs to the peptidase M28 family. M28E subfamily. As to quaternary structure, monomer. Zn(2+) is required as a cofactor.

It is found in the secreted. Its function is as follows. Extracellular aminopeptidase that allows assimilation of proteinaceous substrates. The protein is Leucine aminopeptidase 1 (LAP1) of Grosmannia clavigera (strain kw1407 / UAMH 11150) (Blue stain fungus).